The primary structure comprises 197 residues: Probable GTP-binding protein EngB (197 aa).

Positions 22–195 (NLPEIAFVGR…VDYLFDDLVE (174 aa)) constitute an EngB-type G domain. Residues 30–37 (GRSNVGKS), 57–61 (GKTRL), 75–78 (DLPG), 142–145 (TKSD), and 174–176 (FSS) contribute to the GTP site. Positions 37 and 59 each coordinate Mg(2+).

Belongs to the TRAFAC class TrmE-Era-EngA-EngB-Septin-like GTPase superfamily. EngB GTPase family. Requires Mg(2+) as cofactor.

Necessary for normal cell division and for the maintenance of normal septation. The polypeptide is Probable GTP-binding protein EngB (Clostridium perfringens (strain 13 / Type A)).